A 482-amino-acid polypeptide reads, in one-letter code: MKFEEKCGDNGSIVGRNQSYPGEKHQPKGKPIANGEAEVYAKQEANGKCSTPRKSLSMYTWLEIQRHNHEADQLVINCKVYNVSSWADRHPGGHQVLNHCAGEDAMDVFRAMHPELDIVQLYLKPLLIGELAPGEPSQERHKNSQLVKDFQELWSIAEAMNMFHANLGFFFLHFVQILILEVLAWLIVYHFGSGWPVTMFISFLLTISQASSSFLQHDAGHLSIFRKSKWNHVVHKFVMCHLKGLSADRWNYWHFEQHVKPNIYPKDPDIDTDPLFLLGDSQPVKYGKKKIKYINYEEQHLYFYKVWLPLFMPVYLKLPSMQAMYLQRYWVCFSLQDITWVSSFYIYFITFGLYYGIFGTMLLIYLVKFLESPWIVYVTQMSHITMRMSTEENRDWLTTQVLATCNTESFFNDFTGHLNFQIEHHLFPTMPRHNYHKVAPLVRSLCAKHGLHYVNKPMLRAFGDIVRALKKSAALWADAYYE.

Residues 1-31 form a disordered region; that stretch reads MKFEEKCGDNGSIVGRNQSYPGEKHQPKGKP. The Cytoplasmic portion of the chain corresponds to 1–167; sequence MKFEEKCGDN…EAMNMFHANL (167 aa). Positions 56–132 constitute a Cytochrome b5 heme-binding domain; sequence LSMYTWLEIQ…LKPLLIGELA (77 aa). 2 residues coordinate heme: histidine 90 and histidine 113. A helical membrane pass occupies residues 168–188; it reads GFFFLHFVQILILEVLAWLIV. Residues 189–190 are Lumenal-facing; sequence YH. A helical transmembrane segment spans residues 191 to 211; that stretch reads FGSGWPVTMFISFLLTISQAS. Residues 212–305 are Cytoplasmic-facing; it reads SSFLQHDAGH…YEEQHLYFYK (94 aa). The short motif at 217–221 is the Histidine box-1 element; sequence HDAGH. The Histidine box-2 motif lies at 254 to 258; sequence HFEQH. A helical transmembrane segment spans residues 306 to 326; that stretch reads VWLPLFMPVYLKLPSMQAMYL. Over 327–343 the chain is Lumenal; that stretch reads QRYWVCFSLQDITWVSS. Residues 344–364 form a helical membrane-spanning segment; the sequence is FYIYFITFGLYYGIFGTMLLI. The Cytoplasmic segment spans residues 365–482; that stretch reads YLVKFLESPW…AALWADAYYE (118 aa). The Histidine box-3 signature appears at 421–425; sequence QIEHH.

It belongs to the fatty acid desaturase type 1 family.

It localises to the endoplasmic reticulum membrane. Its pathway is lipid metabolism; polyunsaturated fatty acid biosynthesis. The sequence is that of Putative fatty acid desaturase 2-like protein FADS2B from Homo sapiens (Human).